A 231-amino-acid polypeptide reads, in one-letter code: RNA pyrophosphohydrolase (231 aa).

A Nudix hydrolase domain is found at 6 to 149 (GFRPNVGIIL…KRDVYQLALT (144 aa)). Residues 38 to 59 (GGIKYGETPVQAMYRELHEETG) carry the Nudix box motif. The interval 157 to 190 (RPQPRTERPGGHHHGQRYPRMASSVNAPPGASMA) is disordered.

This sequence belongs to the Nudix hydrolase family. RppH subfamily. The cofactor is a divalent metal cation.

Functionally, accelerates the degradation of transcripts by removing pyrophosphate from the 5'-end of triphosphorylated RNA, leading to a more labile monophosphorylated state that can stimulate subsequent ribonuclease cleavage. The protein is RNA pyrophosphohydrolase of Paraburkholderia phymatum (strain DSM 17167 / CIP 108236 / LMG 21445 / STM815) (Burkholderia phymatum).